We begin with the raw amino-acid sequence, 116 residues long: MYCQRLALPLTRSLLASRAPLALRMENAVAARMISTTVARKDIDSAAKYIGAGAATVGVAGSGAGIGNVFGALVIGYARNPSLKQQLFSYAILGFALSEAMGLFCLTMGFMILFAL.

The N-terminal 24 residues, 1–24 (MYCQRLALPLTRSLLASRAPLALR), are a transit peptide targeting the mitochondrion. A helical membrane pass occupies residues 57-77 (VGVAGSGAGIGNVFGALVIGY). The residue at position 84 (Lys-84) is an N6,N6,N6-trimethyllysine. The helical transmembrane segment at 92 to 112 (ILGFALSEAMGLFCLTMGFMI) threads the bilayer.

The protein belongs to the ATPase C chain family. In terms of assembly, F-type ATPases have 2 components, CF(1) - the catalytic core - and CF(0) - the membrane proton channel. CF(1) has five subunits: alpha(3), beta(3), gamma(1), delta(1), epsilon(1). CF(0) has three main subunits: a, b and c. Trimethylated by ATPSCKMT at Lys-84. Methylation may be required for proper incorporation of the C subunit into the ATP synthase complex and mitochondrial respiration.

The protein resides in the mitochondrion membrane. Functionally, mitochondrial membrane ATP synthase (F(1)F(0) ATP synthase or Complex V) produces ATP from ADP in the presence of a proton gradient across the membrane which is generated by electron transport complexes of the respiratory chain. F-type ATPases consist of two structural domains, F(1) - containing the extramembraneous catalytic core and F(0) - containing the membrane proton channel, linked together by a central stalk and a peripheral stalk. During catalysis, ATP synthesis in the catalytic domain of F(1) is coupled via a rotary mechanism of the central stalk subunits to proton translocation. Part of the complex F(0) domain. A homomeric c-ring of probably 10 subunits is part of the complex rotary element. In Caenorhabditis briggsae, this protein is ATP synthase lipid-binding protein, mitochondrial.